We begin with the raw amino-acid sequence, 424 residues long: Dihydroorotase (424 aa).

His61 and His63 together coordinate Zn(2+). Substrate-binding positions include 63-65 and Asn95; that span reads HLR. The Zn(2+) site is built by Asp153, His180, and His233. Residue Asn279 coordinates substrate. Zn(2+) is bound at residue Asp306. Asp306 is an active-site residue. Residue His310 coordinates substrate.

It belongs to the metallo-dependent hydrolases superfamily. DHOase family. Class I DHOase subfamily. It depends on Zn(2+) as a cofactor.

The catalysed reaction is (S)-dihydroorotate + H2O = N-carbamoyl-L-aspartate + H(+). It functions in the pathway pyrimidine metabolism; UMP biosynthesis via de novo pathway; (S)-dihydroorotate from bicarbonate: step 3/3. Functionally, catalyzes the reversible cyclization of carbamoyl aspartate to dihydroorotate. The chain is Dihydroorotase from Pelobacter propionicus (strain DSM 2379 / NBRC 103807 / OttBd1).